The following is an 829-amino-acid chain: Cadherin-3 (829 aa).

Residues 1–24 form the signal peptide; the sequence is MGLPRGPLASLLLLQVCWLQCAAS. Positions 25–107 are excised as a propeptide; that stretch reads EPCRAVFREA…SKRILRRHKR (83 aa). 5 consecutive Cadherin domains span residues 108–215, 216–328, 329–440, 441–546, and 547–650; these read DWVV…KPKF, TQDT…APMF, DPQK…APVF, VPPS…DHGP, and VPEP…CPGP. The Extracellular portion of the chain corresponds to 108 to 654; sequence DWVVAPISVP…ETCPGPWKGG (547 aa). Asn-200 carries N-linked (GlcNAc...) asparagine glycosylation. Residue Asn-566 is glycosylated (N-linked (GlcNAc...) asparagine). A helical membrane pass occupies residues 655–677; that stretch reads FILPVLGAVLALLFLLLVLLLLV. The Cytoplasmic segment spans residues 678–829; that stretch reads RKKRKIKEPL…ADMYGGGEDD (152 aa).

In terms of assembly, interacts with CDCP1 and CTNNB1. In terms of tissue distribution, expressed in some normal epithelial tissues and in some carcinoma cell lines.

The protein resides in the cell membrane. Its function is as follows. Cadherins are calcium-dependent cell adhesion proteins. They preferentially interact with themselves in a homophilic manner in connecting cells; cadherins may thus contribute to the sorting of heterogeneous cell types. This is Cadherin-3 (CDH3) from Homo sapiens (Human).